Consider the following 335-residue polypeptide: MKFGETFTEYLHGEEEWFLEKCRFVEYKKLKKVLKKCKTCNSTKSDDGQIIPSATSSSLSDSCECKACPWCDQMFFEELMKEATDIAGFFRSRVRHLLHLHVATGMQRYMIRLRRCFTDEKQALVQEGQILIQYITMNAIAIRKILKKYDKVHSSENGKNFKLKMRAERIELLHSPWLIELGAFYLNSGLDNVGNFKNSFGRVACENLNEDQPVLKLMLPNSIELEYDLTCAICLETVFNPYALKCGHIFCNSCACSAASVLIFQGIKAAPRHSKCPICREAGVYAEAVHMIELHLLLKTRSKEYWKERMMNERSEMVKQSKMFWNEQTKHMIGY.

The region spanning 1-163 (MKFGETFTEY…SSENGKNFKL (163 aa)) is the SPX domain. The RING-type zinc-finger motif lies at 231 to 280 (CAICLETVFNPYALKCGHIFCNSCACSAASVLIFQGIKAAPRHSKCPICR).

Belongs to the RING-type zinc finger family.

The enzyme catalyses S-ubiquitinyl-[E2 ubiquitin-conjugating enzyme]-L-cysteine + [acceptor protein]-L-lysine = [E2 ubiquitin-conjugating enzyme]-L-cysteine + N(6)-ubiquitinyl-[acceptor protein]-L-lysine.. The protein operates within protein modification; protein ubiquitination. This is Probable E3 ubiquitin-protein ligase BAH1-like (RF178) from Arabidopsis thaliana (Mouse-ear cress).